A 341-amino-acid polypeptide reads, in one-letter code: Anthranilate phosphoribosyltransferase (341 aa).

5-phospho-alpha-D-ribose 1-diphosphate is bound by residues Gly-81, 84–85, Thr-89, 91–94, 109–117, and Thr-121; these read GD, NIST, and KHGNRKASS. Gly-81 serves as a coordination point for anthranilate. Ser-93 provides a ligand contact to Mg(2+). Residue Asn-112 coordinates anthranilate. Arg-167 provides a ligand contact to anthranilate. Mg(2+)-binding residues include Asp-226 and Glu-227.

Belongs to the anthranilate phosphoribosyltransferase family. In terms of assembly, homodimer. Requires Mg(2+) as cofactor.

The enzyme catalyses N-(5-phospho-beta-D-ribosyl)anthranilate + diphosphate = 5-phospho-alpha-D-ribose 1-diphosphate + anthranilate. The protein operates within amino-acid biosynthesis; L-tryptophan biosynthesis; L-tryptophan from chorismate: step 2/5. Functionally, catalyzes the transfer of the phosphoribosyl group of 5-phosphorylribose-1-pyrophosphate (PRPP) to anthranilate to yield N-(5'-phosphoribosyl)-anthranilate (PRA). The sequence is that of Anthranilate phosphoribosyltransferase from Parvibaculum lavamentivorans (strain DS-1 / DSM 13023 / NCIMB 13966).